We begin with the raw amino-acid sequence, 238 residues long: Ion-translocating oxidoreductase complex subunit E (238 aa).

Transmembrane regions (helical) follow at residues 41 to 61 (LGLGLATMLVLACSNAAVSLV), 71 to 91 (LPAFVMIIAALTTCIELLMQA), 95 to 115 (ELYQVLGIFIPLITTNCVILG), 130 to 150 (SFDGLLMGLGFALVLLVLGGL), and 184 to 204 (GFLLAILPPGAFIMLGLLIAL).

Belongs to the NqrDE/RnfAE family. The complex is composed of six subunits: RnfA, RnfB, RnfC, RnfD, RnfE and RnfG.

It is found in the cell inner membrane. Functionally, part of a membrane-bound complex that couples electron transfer with translocation of ions across the membrane. The chain is Ion-translocating oxidoreductase complex subunit E from Pseudomonas aeruginosa (strain UCBPP-PA14).